The following is a 1925-amino-acid chain: Methylcytosine dioxygenase tet3-A (1925 aa).

The segment at Ser62–Glu103 adopts a CXXC-type zinc-finger fold. Zn(2+) contacts are provided by Cys69, Cys72, Cys75, Cys81, Cys84, Cys87, Cys97, and Cys102. 4 disordered regions span residues Lys457 to Lys476, Lys630 to Phe685, Gly774 to Leu812, and Asp833 to His892. Residues Ser465–Lys476 are compositionally biased toward polar residues. A compositionally biased stretch (basic residues) spans Lys665–Arg677. Low complexity predominate over residues Asp777–Ala797. Composition is skewed to polar residues over residues Ala841–Gly856 and Pro883–His892. Residues Cys982, Cys984, Cys1042, His1068, and Cys1070 each contribute to the Zn(2+) site. Residue Arg1110 participates in 2-oxoglutarate binding. Residues Cys1120, Cys1122, Cys1138, Cys1147, and Cys1207 each contribute to the Zn(2+) site. Position 1223 (Cys1223) interacts with 2-oxoglutarate. His1229 serves as a coordination point for Zn(2+). The Fe cation site is built by His1231 and Asp1233. His1265 is a binding site for 2-oxoglutarate. Disordered regions lie at residues Ser1307–Pro1364, Leu1474–Asn1513, Ser1556–Asp1600, and Asn1722–Ile1769. Over residues Arg1316–Asp1347 the composition is skewed to basic and acidic residues. Residues Met1350 to Lys1363 show a composition bias toward polar residues. A compositionally biased stretch (basic and acidic residues) spans Ser1490–His1499. Composition is skewed to polar residues over residues Ser1502–Asn1513, Ser1556–Asp1572, and Val1730–His1742. His1804 provides a ligand contact to Fe cation. 2-oxoglutarate is bound at residue Arg1819 to Ser1821. A coiled-coil region spans residues Leu1837–Leu1870.

It belongs to the TET family. The cofactor is Fe(2+). Requires Zn(2+) as cofactor. In terms of tissue distribution, detected in embryo (at protein level). Detected in embryonic head, in developing brain, neural tube and eye.

It is found in the nucleus. Its subcellular location is the chromosome. The enzyme catalyses a 5-methyl-2'-deoxycytidine in DNA + 2-oxoglutarate + O2 = a 5-hydroxymethyl-2'-deoxycytidine in DNA + succinate + CO2. It catalyses the reaction a 5-hydroxymethyl-2'-deoxycytidine in DNA + 2-oxoglutarate + O2 = a 5-formyl-2'-deoxycytidine in DNA + succinate + CO2 + H2O. The catalysed reaction is a 5-formyl-2'-deoxycytidine in DNA + 2-oxoglutarate + O2 = a 5-carboxyl-2'-deoxycytidine in DNA + succinate + CO2 + H(+). Dioxygenase that catalyzes the conversion of the modified genomic base 5-methylcytosine (5mC) into 5-hydroxymethylcytosine (5hmC) and plays a key role in epigenetic chromatin reprogramming during embryonic development. Conversion of 5mC into 5hmC probably constitutes the first step in cytosine demethylation. Selectively binds to the promoter region of target genes and contributes to regulate the expression of numerous developmental genes, including pax6, rax, sox9 and six3. May also contribute to the regulation of target genes in ways that do not require its enzyme activity. This chain is Methylcytosine dioxygenase tet3-A, found in Xenopus laevis (African clawed frog).